Here is a 537-residue protein sequence, read N- to C-terminus: MRQEELTIHKALPADGDWKSLLFQPLPERDHYETAQGLSFSRLAGQILGTPIDETDYYNELYELSVNDRITILSETLDKTIEPETFQKLQHIHSINQKEKGLSVSRFVAFLDGEKLIAKHSNPLMHRHLRKALMTLLHTFADSHEKGLNHPDFRRVLLDVSKFSLNHLNPWLEKTDIEREMPKVVWYGDATKSQLYFLYYLMLVGCDVLLFHPAGTDQLALVDPKQELGFTEKLPDVSELQPFPKEKPDRKSTVAYRSTKEIEHVLNHEESMLYKPWQFRDHTPVSVTLKTTYDELFLITKERAFIRPNFKADKHSIEIPNVFAKIMGVSKDNKEYWNRLHTLADYQETEMVRSFPFTEEIKSNYQFHYSHALDQEGNIDPDKLMASNVWQYKQLPAGVQTAIAKTISRMCRYPRLKALHQEQVKDVQIYLFKQTTNLPANLLKLIQMFDYAQTVPKLVLYHTEMSGGLTRSDAAALLFLNEIGIDIIIYNPPGHQDIEQFIEEDQYDIHWLDDMVFQQDYKEPSLVKRLFRTITQK.

This is an uncharacterized protein from Bacillus subtilis (strain 168).